The chain runs to 251 residues: Adenosylcobinamide-GDP ribazoletransferase (251 aa).

6 helical membrane-spanning segments follow: residues 36–56 (LYPF…FVLS), 60–80 (VPIM…TGFL), 110–130 (VGAF…AGIF), 181–201 (EIIL…TLGI), 202–222 (NYLI…LKVK), and 231–251 (DVAG…LGII).

It belongs to the CobS family. It depends on Mg(2+) as a cofactor.

The protein localises to the cell membrane. The enzyme catalyses alpha-ribazole + adenosylcob(III)inamide-GDP = adenosylcob(III)alamin + GMP + H(+). It carries out the reaction alpha-ribazole 5'-phosphate + adenosylcob(III)inamide-GDP = adenosylcob(III)alamin 5'-phosphate + GMP + H(+). Its pathway is cofactor biosynthesis; adenosylcobalamin biosynthesis; adenosylcobalamin from cob(II)yrinate a,c-diamide: step 7/7. Functionally, joins adenosylcobinamide-GDP and alpha-ribazole to generate adenosylcobalamin (Ado-cobalamin). Also synthesizes adenosylcobalamin 5'-phosphate from adenosylcobinamide-GDP and alpha-ribazole 5'-phosphate. This chain is Adenosylcobinamide-GDP ribazoletransferase, found in Clostridium perfringens (strain SM101 / Type A).